Here is a 241-residue protein sequence, read N- to C-terminus: Uridylate kinase (241 aa).

Residue 12–15 coordinates ATP; sequence KISG. An involved in allosteric activation by GTP region spans residues 20 to 25; sequence GDKGNG. Residue glycine 54 coordinates UMP. The ATP site is built by glycine 55 and arginine 59. UMP-binding positions include aspartate 74 and 135-142; that span reads TGNPYFST. ATP contacts are provided by asparagine 163, tyrosine 169, and aspartate 172.

Belongs to the UMP kinase family. In terms of assembly, homohexamer.

It is found in the cytoplasm. The enzyme catalyses UMP + ATP = UDP + ADP. Its pathway is pyrimidine metabolism; CTP biosynthesis via de novo pathway; UDP from UMP (UMPK route): step 1/1. With respect to regulation, allosterically activated by GTP. Inhibited by UTP. Catalyzes the reversible phosphorylation of UMP to UDP. The sequence is that of Uridylate kinase from Lactobacillus helveticus (strain DPC 4571).